Here is a 354-residue protein sequence, read N- to C-terminus: Malate dehydrogenase 2, peroxisomal (354 aa).

Residues 10–18 (RIARISAHL) are peroxisomal targeting signal PTS2. Residues 49–55 (GAAGGIG) and aspartate 75 each bind NAD(+). Arginine 122 and arginine 128 together coordinate substrate. NAD(+) is bound by residues asparagine 135 and 158-160 (ISN). Substrate is bound by residues asparagine 160 and arginine 194. Catalysis depends on histidine 218, which acts as the Proton acceptor. Residue methionine 269 coordinates NAD(+).

Belongs to the LDH/MDH superfamily. MDH type 1 family. As to quaternary structure, homodimer. Expressed in rosette leaves.

It localises to the peroxisome. The enzyme catalyses (S)-malate + NAD(+) = oxaloacetate + NADH + H(+). Catalyzes a reversible NAD-dependent dehydrogenase reaction involved in central metabolism and redox homeostasis between organelle compartments. Peroxisomal NAD-dependent malate dehydrogenase involved in fatty acid beta-oxidation. Reoxidizes NADH from the beta-oxidation and provides NAD for the conversion of fatty acyl-CoA to acetyl-CoA. Does not participate directly in the glyoxylate cycle. Required for maintenance of photosynthetic rates under photorespiratory conditions, and carbon flow during photorespiration. Supplies NADH reductant to the peroxisomal hydroxypyruvate reductase (HPR), which reduces hydroxypyruvate into glycerate in the photorespiratory cycle. The chain is Malate dehydrogenase 2, peroxisomal from Arabidopsis thaliana (Mouse-ear cress).